The sequence spans 380 residues: Cytochrome b (380 aa).

4 consecutive transmembrane segments (helical) span residues 34 to 54 (FGSL…LLAT), 78 to 99 (WLIR…YLHI), 114 to 134 (WNTG…GYVL), and 179 to 199 (FFAL…IHLT). Heme b is bound by residues histidine 84 and histidine 98. Heme b-binding residues include histidine 183 and histidine 197. Histidine 202 is a binding site for a ubiquinone. The next 4 helical transmembrane spans lie at 227-247 (LKDI…ALFS), 289-309 (LGGV…PLLH), 321-341 (LSQF…WVGS), and 348-368 (FIII…LLFP).

The protein belongs to the cytochrome b family. The cytochrome bc1 complex contains 11 subunits: 3 respiratory subunits (MT-CYB, CYC1 and UQCRFS1), 2 core proteins (UQCRC1 and UQCRC2) and 6 low-molecular weight proteins (UQCRH/QCR6, UQCRB/QCR7, UQCRQ/QCR8, UQCR10/QCR9, UQCR11/QCR10 and a cleavage product of UQCRFS1). This cytochrome bc1 complex then forms a dimer. Heme b is required as a cofactor.

Its subcellular location is the mitochondrion inner membrane. Functionally, component of the ubiquinol-cytochrome c reductase complex (complex III or cytochrome b-c1 complex) that is part of the mitochondrial respiratory chain. The b-c1 complex mediates electron transfer from ubiquinol to cytochrome c. Contributes to the generation of a proton gradient across the mitochondrial membrane that is then used for ATP synthesis. The sequence is that of Cytochrome b (MT-CYB) from Pinguinus impennis (Great auk).